Reading from the N-terminus, the 879-residue chain is Phosphoenolpyruvate carboxylase (879 aa).

Active-site residues include His138 and Lys546.

Belongs to the PEPCase type 1 family. Requires Mg(2+) as cofactor.

It catalyses the reaction oxaloacetate + phosphate = phosphoenolpyruvate + hydrogencarbonate. Forms oxaloacetate, a four-carbon dicarboxylic acid source for the tricarboxylic acid cycle. The sequence is that of Phosphoenolpyruvate carboxylase from Pectobacterium atrosepticum (strain SCRI 1043 / ATCC BAA-672) (Erwinia carotovora subsp. atroseptica).